Consider the following 597-residue polypeptide: Arginine--tRNA ligase (597 aa).

The 'HIGH' region signature appears at 138–148 (ANPTGPMHVGH).

This sequence belongs to the class-I aminoacyl-tRNA synthetase family. In terms of assembly, monomer.

Its subcellular location is the cytoplasm. It catalyses the reaction tRNA(Arg) + L-arginine + ATP = L-arginyl-tRNA(Arg) + AMP + diphosphate. The chain is Arginine--tRNA ligase from Rhodopseudomonas palustris (strain HaA2).